The sequence spans 307 residues: F-box protein At2g23160 (307 aa).

In terms of domain architecture, F-box spans 2–49 (NSSSPISIDLIAEILSRVPSKSVARFRCVSKPWASMIRRPYFTELFLT).

This is F-box protein At2g23160 from Arabidopsis thaliana (Mouse-ear cress).